Reading from the N-terminus, the 305-residue chain is MGKPDLSVEVAGIKLRNPVMTASGTFGYGKEFADYLDLEKIGAIITKGLSIRPKAGNPTPRIVETPGGMLNAIGLQNVGIDAFIQEKLPFLRTVNTPVIVNLYGNTLEEYGELAEKLDKLPEVAGLEVNISCPNVKQGGIVFGTDPNAAYEVVSLVRESTIKPLIVKLSPNVTNVVEMANACVDAGADALSLINTLTGMAIDLQKRRPILANMTGGLSGPAIKPVALRMVWQVAQAVKVPVIGIGGIMTATDALEFMLAGATAVQVGTANFLDPSAAQTIAEGMETYLEENGIADVKELIGALIT.

FMN contacts are provided by residues Ser-23 and 47 to 48 (KG). Residues Lys-47 and 71–75 (NAIGL) each bind substrate. Positions 101 and 129 each coordinate FMN. Asn-129 lines the substrate pocket. The Nucleophile role is filled by Cys-132. The FMN site is built by Lys-167 and Ile-193. 194–195 (NT) serves as a coordination point for substrate. Residues Gly-219, 245–246 (GG), and 267–268 (GT) each bind FMN.

The protein belongs to the dihydroorotate dehydrogenase family. Type 1 subfamily. Heterotetramer of 2 PyrK and 2 PyrD type B subunits. FMN serves as cofactor.

The protein resides in the cytoplasm. The enzyme catalyses (S)-dihydroorotate + NAD(+) = orotate + NADH + H(+). The protein operates within pyrimidine metabolism; UMP biosynthesis via de novo pathway; orotate from (S)-dihydroorotate (NAD(+) route): step 1/1. Its function is as follows. Catalyzes the conversion of dihydroorotate to orotate with NAD(+) as electron acceptor. The protein is Dihydroorotate dehydrogenase B (NAD(+)), catalytic subunit (pyrD) of Geotalea uraniireducens (strain Rf4) (Geobacter uraniireducens).